Here is a 196-residue protein sequence, read N- to C-terminus: MNTYLSEITNLIYYINLKEVCMLYNNIKSYLLSGITVILLTGHPVIAADNVSKPDNKSQTAYLQHPPDLRPFSIFDYYLDNMFEHKLSAYSSSAIRTKFITQDKQYILVLEVPGYDKSQIKVKVNSNKLFITGNVEQNNKSEASDDYTKRNFNYVVSLYEDVDQNNISSNLKNGILTITLPRIEVKEKDAKEIPIQ.

One can recognise a sHSP domain in the interval 88–196; it reads SAYSSSAIRT…EKDAKEIPIQ (109 aa).

It belongs to the small heat shock protein (HSP20) family.

The chain is Small heat shock protein C3 (hspc3-1) from Rickettsia felis (strain ATCC VR-1525 / URRWXCal2) (Rickettsia azadi).